Consider the following 213-residue polypeptide: Probable nicotinate-nucleotide adenylyltransferase (213 aa).

It belongs to the NadD family.

It catalyses the reaction nicotinate beta-D-ribonucleotide + ATP + H(+) = deamido-NAD(+) + diphosphate. It participates in cofactor biosynthesis; NAD(+) biosynthesis; deamido-NAD(+) from nicotinate D-ribonucleotide: step 1/1. Its function is as follows. Catalyzes the reversible adenylation of nicotinate mononucleotide (NaMN) to nicotinic acid adenine dinucleotide (NaAD). This Shigella boydii serotype 4 (strain Sb227) protein is Probable nicotinate-nucleotide adenylyltransferase.